The chain runs to 309 residues: Porphobilinogen deaminase (309 aa).

The residue at position 241 (cysteine 241) is an S-(dipyrrolylmethanemethyl)cysteine.

Belongs to the HMBS family. Monomer. It depends on dipyrromethane as a cofactor.

It carries out the reaction 4 porphobilinogen + H2O = hydroxymethylbilane + 4 NH4(+). Its pathway is porphyrin-containing compound metabolism; protoporphyrin-IX biosynthesis; coproporphyrinogen-III from 5-aminolevulinate: step 2/4. Functionally, tetrapolymerization of the monopyrrole PBG into the hydroxymethylbilane pre-uroporphyrinogen in several discrete steps. In Campylobacter concisus (strain 13826), this protein is Porphobilinogen deaminase.